A 349-amino-acid chain; its full sequence is Probable dual-specificity RNA methyltransferase RlmN (349 aa).

The active-site Proton acceptor is the Glu94. In terms of domain architecture, Radical SAM core spans 100 to 334 (TETRTTACVS…VKVRRSRGKD (235 aa)). The cysteines at positions 107 and 339 are disulfide-linked. [4Fe-4S] cluster is bound by residues Cys114, Cys118, and Cys121. Residues 165–166 (GE), Ser197, 220–222 (SLH), and Asn296 contribute to the S-adenosyl-L-methionine site. Cys339 serves as the catalytic S-methylcysteine intermediate.

Belongs to the radical SAM superfamily. RlmN family. [4Fe-4S] cluster is required as a cofactor.

The protein resides in the cytoplasm. The catalysed reaction is adenosine(2503) in 23S rRNA + 2 reduced [2Fe-2S]-[ferredoxin] + 2 S-adenosyl-L-methionine = 2-methyladenosine(2503) in 23S rRNA + 5'-deoxyadenosine + L-methionine + 2 oxidized [2Fe-2S]-[ferredoxin] + S-adenosyl-L-homocysteine. It carries out the reaction adenosine(37) in tRNA + 2 reduced [2Fe-2S]-[ferredoxin] + 2 S-adenosyl-L-methionine = 2-methyladenosine(37) in tRNA + 5'-deoxyadenosine + L-methionine + 2 oxidized [2Fe-2S]-[ferredoxin] + S-adenosyl-L-homocysteine. In terms of biological role, specifically methylates position 2 of adenine 2503 in 23S rRNA and position 2 of adenine 37 in tRNAs. The sequence is that of Probable dual-specificity RNA methyltransferase RlmN from Flavobacterium johnsoniae (strain ATCC 17061 / DSM 2064 / JCM 8514 / BCRC 14874 / CCUG 350202 / NBRC 14942 / NCIMB 11054 / UW101) (Cytophaga johnsonae).